Consider the following 62-residue polypeptide: Small ribosomal subunit protein uS14 (62 aa).

Residues Cys-25, Cys-28, Cys-41, and Cys-44 each contribute to the Zn(2+) site.

The protein belongs to the universal ribosomal protein uS14 family. Zinc-binding uS14 subfamily. As to quaternary structure, part of the 30S ribosomal subunit. Contacts proteins S3 and S10. The cofactor is Zn(2+).

Functionally, binds 16S rRNA, required for the assembly of 30S particles and may also be responsible for determining the conformation of the 16S rRNA at the A site. This is Small ribosomal subunit protein uS14 from Aquifex aeolicus (strain VF5).